The following is a 263-amino-acid chain: Undecaprenyl-diphosphatase 2 (263 aa).

Transmembrane regions (helical) follow at residues 15–37, 42–62, 83–103, 106–126, 142–162, 183–203, 216–236, and 242–262; these read GLTE…LLGF, AKVF…VIFW, LHII…HSAI, VLFG…LMIV, ITYK…WPGF, AEYT…LDLI, LFAT…VSFL, and VKLT…YFFI.

Belongs to the UppP family.

The protein localises to the cell membrane. The catalysed reaction is di-trans,octa-cis-undecaprenyl diphosphate + H2O = di-trans,octa-cis-undecaprenyl phosphate + phosphate + H(+). Catalyzes the dephosphorylation of undecaprenyl diphosphate (UPP). Confers resistance to bacitracin. The chain is Undecaprenyl-diphosphatase 2 from Bacillus cereus (strain ATCC 10987 / NRS 248).